The sequence spans 102 residues: Putative pterin-4-alpha-carbinolamine dehydratase (102 aa).

The protein belongs to the pterin-4-alpha-carbinolamine dehydratase family.

It catalyses the reaction (4aS,6R)-4a-hydroxy-L-erythro-5,6,7,8-tetrahydrobiopterin = (6R)-L-erythro-6,7-dihydrobiopterin + H2O. The protein is Putative pterin-4-alpha-carbinolamine dehydratase of Burkholderia lata (strain ATCC 17760 / DSM 23089 / LMG 22485 / NCIMB 9086 / R18194 / 383).